A 469-amino-acid polypeptide reads, in one-letter code: Transcription factor phomD' (469 aa).

Positions 14–41 (CNACNESKVRCSQRKPTCARCERNGVEC) form a DNA-binding region, zn(2)-C6 fungal-type. Positions 49 to 118 (THKDAPPISM…QQKDEAAAAA (70 aa)) are disordered. The span at 82 to 93 (KANSNSSSNWHM) shows a compositional bias: polar residues. Low complexity predominate over residues 104–118 (QQQQQQQKDEAAAAA).

It is found in the nucleus. Its function is as follows. Transcription factor; part of the gene cluster that mediates the biosynthesis of the phomopsins, a group of hexapeptide mycotoxins which infects lupins and causes lupinosis disease in livestock. May play a role in the regulation of the production of phomopsins. The sequence is that of Transcription factor phomD' from Diaporthe leptostromiformis (Lupinosis disease fungus).